The primary structure comprises 111 residues: Nucleoid-associated protein NMC1380 (111 aa).

It belongs to the YbaB/EbfC family. Homodimer.

The protein localises to the cytoplasm. It localises to the nucleoid. Binds to DNA and alters its conformation. May be involved in regulation of gene expression, nucleoid organization and DNA protection. In Neisseria meningitidis serogroup C / serotype 2a (strain ATCC 700532 / DSM 15464 / FAM18), this protein is Nucleoid-associated protein NMC1380.